A 184-amino-acid polypeptide reads, in one-letter code: Putative manganese efflux pump MntP (184 aa).

6 consecutive transmembrane segments (helical) span residues 3–23 (LLSM…ISVS), 36–56 (ALIS…LGWV), 65–85 (VSAL…LKMI), 103–123 (LLVL…SFAL), 126–146 (ISIW…SLAG), and 163–183 (ALGG…NVSF).

Belongs to the MntP (TC 9.B.29) family.

The protein localises to the cell membrane. Its function is as follows. Probably functions as a manganese efflux pump. The protein is Putative manganese efflux pump MntP of Methanothermobacter thermautotrophicus (strain ATCC 29096 / DSM 1053 / JCM 10044 / NBRC 100330 / Delta H) (Methanobacterium thermoautotrophicum).